We begin with the raw amino-acid sequence, 248 residues long: 3-deoxy-manno-octulosonate cytidylyltransferase (248 aa).

This sequence belongs to the KdsB family.

The protein resides in the cytoplasm. The enzyme catalyses 3-deoxy-alpha-D-manno-oct-2-ulosonate + CTP = CMP-3-deoxy-beta-D-manno-octulosonate + diphosphate. The protein operates within nucleotide-sugar biosynthesis; CMP-3-deoxy-D-manno-octulosonate biosynthesis; CMP-3-deoxy-D-manno-octulosonate from 3-deoxy-D-manno-octulosonate and CTP: step 1/1. It participates in bacterial outer membrane biogenesis; lipopolysaccharide biosynthesis. Activates KDO (a required 8-carbon sugar) for incorporation into bacterial lipopolysaccharide in Gram-negative bacteria. In Salmonella paratyphi A (strain ATCC 9150 / SARB42), this protein is 3-deoxy-manno-octulosonate cytidylyltransferase.